The primary structure comprises 399 residues: MALRVAGLFLKKELVAPATQQLRLLRTGNTTRSQFLANSPNTALDKSILQRYRNLETPANRVQATYLWIDGTGENIRLKDRVLDKVPSSVEDLPDWQYDGSSTYQAHGENSDTTLKPRAIYRDPFKPGKNDVIVLCDTYSADGKPTASNKRAAFQAAIDLISDQEPWFGIEQEYTLLDVDGRPFGWPENGFPAPQGPYYCGVGADRVYARDLVEAHVVACLYAGIDFAGTNAEVMPAQWEFQIGPAGIKACDDLWVSRYILQRIAEEYGVVVTFDPKPMEGQWNGAGAHTNFSTKEMRADGGIKAIEEAIEKLSKRHERHIKAYDPKEGKDNERRLVGRLETSSIDKFSWGVANRAVSVRVPRGVATAGKGYLEDRRPSSNCDPYAVCNAIVRTCLLNE.

The transit peptide at 1-27 directs the protein to the mitochondrion; sequence MALRVAGLFLKKELVAPATQQLRLLRT. The 82-residue stretch at 62 to 143 folds into the GS beta-grasp domain; that stretch reads VQATYLWIDG…VLCDTYSADG (82 aa). Positions 150-399 constitute a GS catalytic domain; that stretch reads KRAAFQAAID…AIVRTCLLNE (250 aa).

The protein belongs to the glutamine synthetase family. As to quaternary structure, homooctamer.

It is found in the mitochondrion. It catalyses the reaction L-glutamate + NH4(+) + ATP = L-glutamine + ADP + phosphate + H(+). The chain is Glutamine synthetase 1, mitochondrial (Gs1) from Drosophila melanogaster (Fruit fly).